A 274-amino-acid polypeptide reads, in one-letter code: Dermonecrotic toxin SaSicTox-betaIIB1 (274 aa).

His5 is an active-site residue. 2 residues coordinate Mg(2+): Glu25 and Asp27. His41 acts as the Nucleophile in catalysis. 2 disulfide bridges follow: Cys45–Cys51 and Cys47–Cys190. Asp85 provides a ligand contact to Mg(2+).

The protein belongs to the arthropod phospholipase D family. Class II subfamily. Mg(2+) serves as cofactor. Expressed by the venom gland.

The protein resides in the secreted. It catalyses the reaction an N-(acyl)-sphingosylphosphocholine = an N-(acyl)-sphingosyl-1,3-cyclic phosphate + choline. The enzyme catalyses an N-(acyl)-sphingosylphosphoethanolamine = an N-(acyl)-sphingosyl-1,3-cyclic phosphate + ethanolamine. The catalysed reaction is a 1-acyl-sn-glycero-3-phosphocholine = a 1-acyl-sn-glycero-2,3-cyclic phosphate + choline. It carries out the reaction a 1-acyl-sn-glycero-3-phosphoethanolamine = a 1-acyl-sn-glycero-2,3-cyclic phosphate + ethanolamine. Dermonecrotic toxins cleave the phosphodiester linkage between the phosphate and headgroup of certain phospholipids (sphingolipid and lysolipid substrates), forming an alcohol (often choline) and a cyclic phosphate. This toxin acts on sphingomyelin (SM). It may also act on ceramide phosphoethanolamine (CPE), lysophosphatidylcholine (LPC) and lysophosphatidylethanolamine (LPE), but not on lysophosphatidylserine (LPS), and lysophosphatidylglycerol (LPG). It acts by transphosphatidylation, releasing exclusively cyclic phosphate products as second products. Induces dermonecrosis, hemolysis, increased vascular permeability, edema, inflammatory response, and platelet aggregation. This is Dermonecrotic toxin SaSicTox-betaIIB1 from Sicarius albospinosus (Six-eyed crab spider).